Consider the following 636-residue polypeptide: Polyadenylate-binding protein 1 (636 aa).

Residue M1 is modified to N-acetylmethionine. 4 RRM domains span residues 11 to 89 (ASLY…WSQR), 99 to 175 (GNIF…RFKS), 191 to 268 (TNVY…RAQK), and 294 to 370 (VNLY…LAQR). The tract at residues 166-289 (RKVFVGRFKS…FEQMKQDRIT (124 aa)) is CSDE1-binding. Residue K299 is modified to N6-methyllysine. A Phosphoserine modification is found at S315. A Phosphothreonine modification is found at T319. Residues R385, R419, R432, and R436 each carry the omega-N-methylarginine modification. Residues R455 and R460 each carry the omega-N-methylated arginine; by CARM1 modification. 2 positions are modified to omega-N-methylarginine: R475 and R481. An Asymmetric dimethylarginine; alternate modification is found at R493. Residue R493 is modified to Dimethylated arginine; alternate. R493 is modified (omega-N-methylarginine; alternate). R506 is subject to Omega-N-methylarginine. K512 carries the N6-acetyllysine modification. At R518 the chain carries Omega-N-methylarginine. The region spanning 542–619 (QEPLTASMLA…AVAVLQAHQA (78 aa)) is the PABC domain.

This sequence belongs to the polyadenylate-binding protein type-1 family. In terms of assembly, may form homodimers. Component of a multisubunit autoregulatory ribonucleoprotein complex (ARC), at least composed of IGF2BP1, PABPC1 and CSDE1. Directly interacts with IGF2BP1. Part of a complex associated with the FOS mCRD domain and consisting of HNRPD, SYNCRIP, PAIP1 and CSDE1/UNR. Interacts with PAIP1 and PAIP2 (via the PABPC1-interacting motifs PAM1 and PAM2). Interacts with PAIP1 with a 1:1 stoichiometry and with PAIP2 with a 1:2 stoichiometry. The interaction with CSDE1 is direct and RNA-independent. Found in a mRNP complex with YBX2. Interacts with TENT2/GLD2. Identified in the spliceosome C complex. Identified in a mRNP complex, at least composed of DHX9, DDX3X, ELAVL1, HNRNPU, IGF2BP1, ILF3, PABPC1, PCBP2, PTBP2, STAU1, STAU2, SYNCRIP and YBX1. The interaction with DDX3X is direct and RNA-independent. This interaction increases in stressed cells and decreases during cell recovery. Identified in a IGF2BP1-dependent mRNP granule complex containing untranslated mRNAs. Interacts with NXF1/TAP. Interacts with PIWIL1. Interacts with AGO1, AGO2, GSPT1 and GSPT2. Interacts with LARP4B. Interacts (via the second and third RRM domains and the C-terminus) with PAIP2B (via central acidic portion and C-terminus). Forms a complex with LARP1 and SHFL. Interacts with LARP4. Interacts with ZFC3H1 in a RNase-sensitive manner. Interacts with TRIM71 (via NHL repeats) in an RNA-dependent manner. Interacts with TENT5C; the interaction has no effect on TENT5C poly(A) polymerase function. Interacts with G3BP1 and G3BP2. Interacts with ENDOV; the interaction is RNA-dependent and stimulates ENDOV activity. Interacts with UPF1; the interaction is RNA-dependent. Interacts with IGF2BP2 and IGF2BP3. May interact with SETX. Interacts with RBM46. Interacts with PAN3. In terms of processing, phosphorylated by MAPKAPK2. Post-translationally, methylated by CARM1. Arg-493 is dimethylated, probably to asymmetric dimethylarginine.

Its subcellular location is the cytoplasm. It is found in the stress granule. The protein localises to the nucleus. The protein resides in the cell projection. It localises to the lamellipodium. Binds the poly(A) tail of mRNA, including that of its own transcript, and regulates processes of mRNA metabolism such as pre-mRNA splicing and mRNA stability. Its function in translational initiation regulation can either be enhanced by PAIP1 or repressed by PAIP2. Can probably bind to cytoplasmic RNA sequences other than poly(A) in vivo. Binds to N6-methyladenosine (m6A)-containing mRNAs and contributes to MYC stability by binding to m6A-containing MYC mRNAs. Involved in translationally coupled mRNA turnover. Implicated with other RNA-binding proteins in the cytoplasmic deadenylation/translational and decay interplay of the FOS mRNA mediated by the major coding-region determinant of instability (mCRD) domain. Involved in regulation of nonsense-mediated decay (NMD) of mRNAs containing premature stop codons; for the recognition of premature termination codons (PTC) and initiation of NMD a competitive interaction between UPF1 and PABPC1 with the ribosome-bound release factors is proposed. By binding to long poly(A) tails, may protect them from uridylation by ZCCHC6/ZCCHC11 and hence contribute to mRNA stability. The protein is Polyadenylate-binding protein 1 (PABPC1) of Bos taurus (Bovine).